The primary structure comprises 515 residues: Brahma-associated protein of 60 kDa (515 aa).

The interval 1–124 (MSQRFAPGQA…GGSKSDFATA (124 aa)) is disordered. Residues 17-34 (QPPPPAPGMRPYPPPGAS) show a composition bias toward pro residues. Over residues 49-62 (PVPGTANVAGVPGV) the composition is skewed to low complexity. A compositionally biased stretch (gly residues) spans 90 to 103 (TGAGGGGVGSGGGS). A DNA-binding region spans residues 116–204 (GSKSDFATAK…SKEPTNDGEE (89 aa)). In terms of domain architecture, SWIB/MDM2 spans 291 to 368 (YQPLQFKLDP…PQRLNPLLHP (78 aa)).

There are 2 distinct Brahma complexes in the fruit fly, the Brahma-associated proteins (BAP) and Polybromo-containing BAP (PBAP) complexes, which are composed of common subunits Brm, Mor, Snr1/Bap45, Bap111/Dalo, Bap55, Bap60 and Act42A/Bap47, and additional signature subunits osa in the BAP complex and Polybromo and Bap170 in the PBAP complex. Interacts with sisA and sc. Interacts with mor. Interacts with p53. Interacts with erm (via N-terminal). Interacts with akirin; interaction is immune stimulation-dependent; activates selected Rel target gene promoters.

Its function is as follows. Involved in the recruitment and site-specific anchoring of the Brahma complex at specific promoter sites. The Brahma complex is a multiprotein complex which is the equivalent of the yeast SWI/SNF complex and acts by remodeling the chromatin by catalyzing an ATP-dependent alteration in the structure of nucleosomal DNA. This complex can both serve as a transcriptional coactivator or corepressor, depending on the context. Participates in X-chromosomal dosage compensation. Participates in neurogenesis. The chain is Brahma-associated protein of 60 kDa (Bap60) from Drosophila melanogaster (Fruit fly).